Consider the following 419-residue polypeptide: Light-independent protochlorophyllide reductase subunit N (419 aa).

Positions 20, 45, and 102 each coordinate [4Fe-4S] cluster.

This sequence belongs to the BchN/ChlN family. As to quaternary structure, protochlorophyllide reductase is composed of three subunits; BchL, BchN and BchB. Forms a heterotetramer of two BchB and two BchN subunits. [4Fe-4S] cluster serves as cofactor.

The enzyme catalyses chlorophyllide a + oxidized 2[4Fe-4S]-[ferredoxin] + 2 ADP + 2 phosphate = protochlorophyllide a + reduced 2[4Fe-4S]-[ferredoxin] + 2 ATP + 2 H2O. It participates in porphyrin-containing compound metabolism; bacteriochlorophyll biosynthesis (light-independent). In terms of biological role, component of the dark-operative protochlorophyllide reductase (DPOR) that uses Mg-ATP and reduced ferredoxin to reduce ring D of protochlorophyllide (Pchlide) to form chlorophyllide a (Chlide). This reaction is light-independent. The NB-protein (BchN-BchB) is the catalytic component of the complex. The chain is Light-independent protochlorophyllide reductase subunit N from Chlorobaculum tepidum (strain ATCC 49652 / DSM 12025 / NBRC 103806 / TLS) (Chlorobium tepidum).